Reading from the N-terminus, the 506-residue chain is 2,3-bisphosphoglycerate-independent phosphoglycerate mutase (506 aa).

Residues D13 and S63 each contribute to the Mn(2+) site. Catalysis depends on S63, which acts as the Phosphoserine intermediate. Residues H124, 153-154 (RD), R183, R189, 254-257 (RADR), and K330 each bind substrate. The Mn(2+) site is built by D396, H400, D437, H438, and H456.

Belongs to the BPG-independent phosphoglycerate mutase family. Monomer. Requires Mn(2+) as cofactor.

It carries out the reaction (2R)-2-phosphoglycerate = (2R)-3-phosphoglycerate. It participates in carbohydrate degradation; glycolysis; pyruvate from D-glyceraldehyde 3-phosphate: step 3/5. Functionally, catalyzes the interconversion of 2-phosphoglycerate and 3-phosphoglycerate. The protein is 2,3-bisphosphoglycerate-independent phosphoglycerate mutase of Cereibacter sphaeroides (strain ATCC 17025 / ATH 2.4.3) (Rhodobacter sphaeroides).